We begin with the raw amino-acid sequence, 234 residues long: Adenosine 5'-phosphosulfate reductase (234 aa).

Residues Cys-120, Cys-121, Cys-203, and Cys-206 each coordinate [4Fe-4S] cluster. The active-site Nucleophile; cysteine thiosulfonate intermediate is Cys-229.

It belongs to the PAPS reductase family. CysH subfamily. The cofactor is [4Fe-4S] cluster.

It is found in the cytoplasm. It carries out the reaction [thioredoxin]-disulfide + sulfite + AMP + 2 H(+) = adenosine 5'-phosphosulfate + [thioredoxin]-dithiol. It participates in sulfur metabolism; hydrogen sulfide biosynthesis; sulfite from sulfate. In terms of biological role, catalyzes the formation of sulfite from adenosine 5'-phosphosulfate (APS) using thioredoxin as an electron donor. This is Adenosine 5'-phosphosulfate reductase from Bacillus cereus (strain AH820).